A 428-amino-acid chain; its full sequence is Divergent protein kinase domain 1A (428 aa).

Topologically, residues 1 to 27 are cytoplasmic; it reads MARSLCAGAWLRKPHYLQARLSYMRVK. A helical membrane pass occupies residues 28-48; it reads YLFFSWLVVFVGSWIIYVQYS. Residues 49-428 are Lumenal-facing; that stretch reads TYTELCRGKD…WKKISYTNDS (380 aa).

It belongs to the DIPK family. In terms of processing, among the many cysteines in the lumenal domain, most are probably involved in disulfide bonds. In terms of tissue distribution, ubiquitous.

The protein resides in the endoplasmic reticulum membrane. The polypeptide is Divergent protein kinase domain 1A (Dipk1a) (Mus musculus (Mouse)).